Reading from the N-terminus, the 102-residue chain is Flagellar hook-basal body complex protein FliE 1 (102 aa).

It belongs to the FliE family.

It is found in the bacterial flagellum basal body. The protein is Flagellar hook-basal body complex protein FliE 1 (fliE1) of Bradyrhizobium diazoefficiens (strain JCM 10833 / BCRC 13528 / IAM 13628 / NBRC 14792 / USDA 110).